Reading from the N-terminus, the 161-residue chain is Allophycocyanin alpha chain (161 aa).

At Asn71 the chain carries N4-methylasparagine. Residue Cys81 coordinates (2R,3E)-phycocyanobilin.

This sequence belongs to the phycobiliprotein family. Heterodimer of an alpha and a beta chain. Post-translationally, contains one covalently linked phycocyanobilin chromophore.

The protein resides in the plastid. Its subcellular location is the chloroplast thylakoid membrane. Light-harvesting photosynthetic bile pigment-protein from the phycobiliprotein complex. Allophycocyanin has a maximum absorption at approximately 650 nanometers. In Pyropia haitanensis (Red seaweed), this protein is Allophycocyanin alpha chain (apcA).